Consider the following 54-residue polypeptide: TATVDCSDYPKPACLLEYMPLCGSDNKTYDNKCSFCNAVVDSNGTLSLSHFGKC.

One can recognise a Kazal-like domain in the interval 4–54 (VDCSDYPKPACLLEYMPLCGSDNKTYDNKCSFCNAVVDSNGTLSLSHFGKC). 3 disulfide bridges follow: cysteine 6–cysteine 36, cysteine 14–cysteine 33, and cysteine 22–cysteine 54. N-linked (GlcNAc...) asparagine glycosylation occurs at asparagine 43.

It localises to the secreted. This Opisthocomus hoazin (Hoatzin) protein is Ovomucoid.